We begin with the raw amino-acid sequence, 281 residues long: Probable endonuclease 4 (281 aa).

The Zn(2+) site is built by histidine 67, histidine 107, glutamate 144, aspartate 178, histidine 181, histidine 215, aspartate 228, histidine 230, and glutamate 260.

The protein belongs to the AP endonuclease 2 family. Zn(2+) is required as a cofactor.

The enzyme catalyses Endonucleolytic cleavage to 5'-phosphooligonucleotide end-products.. Its function is as follows. Endonuclease IV plays a role in DNA repair. It cleaves phosphodiester bonds at apurinic or apyrimidinic (AP) sites, generating a 3'-hydroxyl group and a 5'-terminal sugar phosphate. This Methanocorpusculum labreanum (strain ATCC 43576 / DSM 4855 / Z) protein is Probable endonuclease 4.